The primary structure comprises 590 residues: Putative ferric-chelate reductase 1 (590 aa).

Residues 2-22 traverse the membrane as a helical segment; the sequence is NPLGLFLIYLYTCALTPVSGY. A Reelin domain is found at 12–179; sequence YTCALTPVSG…APKIPSSTIP (168 aa). The region spanning 217–330 is the DOMON domain; the sequence is ECFFLSFRKD…RSYFIFLADG (114 aa). Residues 334-533 form the Cytochrome b561 domain; that stretch reads DGLLYRHHRQ…VFVDLLLEAH (200 aa). The helical transmembrane segment at 371–391 threads the bilayer; it reads LHGAMMFIAWMTTVSIGVIIA. Heme b contacts are provided by His-372 and His-413. 2 helical membrane passes run 416–436 and 445–465; these read LMIT…IYRG and HPHL…LAVF. His-445 provides a ligand contact to heme b. N-linked (GlcNAc...) asparagine glycosylation is present at Asn-478. His-481 contributes to the heme b binding site. 3 consecutive transmembrane segments (helical) span residues 482 to 502, 517 to 537, and 567 to 587; these read WATG…GMDL, IGFV…GFCL, and IVMT…LAAI.

It belongs to the FRRS1 family. Heme b is required as a cofactor.

The protein resides in the membrane. Putative ferric-chelate reductases reduce Fe(3+) to Fe(2+) before its transport from the endosome to the cytoplasm. The sequence is that of Putative ferric-chelate reductase 1 (frrs1) from Xenopus laevis (African clawed frog).